The sequence spans 910 residues: UPF0182 protein Acid_6445 (910 aa).

The next 7 membrane-spanning stretches (helical) occupy residues 17 to 37 (ITLL…AGYA), 56 to 76 (LYYG…ALWI), 101 to 121 (LALL…WTVV), 157 to 177 (LLRS…WIAA), 210 to 229 (FLRG…FYLG), 252 to 272 (IGLP…AFVA), and 276 to 296 (WFLA…PRIV).

This sequence belongs to the UPF0182 family.

It is found in the cell membrane. This chain is UPF0182 protein Acid_6445, found in Solibacter usitatus (strain Ellin6076).